The chain runs to 342 residues: Ribosomal RNA small subunit methyltransferase H (342 aa).

Residues 42 to 44 (GGH), D61, F88, D119, and Q126 contribute to the S-adenosyl-L-methionine site.

This sequence belongs to the methyltransferase superfamily. RsmH family.

The protein resides in the cytoplasm. The enzyme catalyses cytidine(1402) in 16S rRNA + S-adenosyl-L-methionine = N(4)-methylcytidine(1402) in 16S rRNA + S-adenosyl-L-homocysteine + H(+). Functionally, specifically methylates the N4 position of cytidine in position 1402 (C1402) of 16S rRNA. The protein is Ribosomal RNA small subunit methyltransferase H of Corynebacterium jeikeium (strain K411).